The chain runs to 189 residues: GMP synthase [glutamine-hydrolyzing] subunit A (189 aa).

One can recognise a Glutamine amidotransferase type-1 domain in the interval 5-189; it reads KILVVNNYGQ…TNFLEICEKY (185 aa). The active-site Nucleophile is the Cys79. Active-site residues include His166 and Glu168.

In terms of assembly, heterodimer composed of a glutamine amidotransferase subunit (A) and a GMP-binding subunit (B).

The enzyme catalyses XMP + L-glutamine + ATP + H2O = GMP + L-glutamate + AMP + diphosphate + 2 H(+). The protein operates within purine metabolism; GMP biosynthesis; GMP from XMP (L-Gln route): step 1/1. Catalyzes the synthesis of GMP from XMP. The protein is GMP synthase [glutamine-hydrolyzing] subunit A of Methanosarcina barkeri (strain Fusaro / DSM 804).